We begin with the raw amino-acid sequence, 580 residues long: Keratin, type II cytoskeletal 5 (580 aa).

Residues 1-161 (MSRQSSVSFR…DPTIQRVRTE (161 aa)) form a head region. A phosphoserine mark is found at serine 5, serine 8, serine 16, and serine 21. Threonine 24 carries the phosphothreonine; by CDK1 modification. Phosphoserine is present on residues serine 26, serine 36, serine 47, serine 61, serine 68, serine 72, serine 75, and serine 79. A Phosphothreonine; by CDK1 modification is found at threonine 145. Threonine 160 bears the Phosphothreonine; by AURKB mark. The tract at residues 162–197 (EREQIKTLNNKFASFIDKVRFLEQQNKVLDTKWALL) is coil 1A. The IF rod domain occupies 162–475 (EREQIKTLNN…KLLEGEECRL (314 aa)). The tract at residues 198–216 (QEQGTKTIKQNLDPLFEQY) is linker 1. The segment at 217-309 (INNLRRQLDG…FFDAELSQMQ (93 aa)) is coil 1B. Residues 310–332 (THVSDTSVVLSMDNNRSLDLDSI) are linker 12. The segment at 333 to 471 (IAEVKAQYED…ATYRKLLEGE (139 aa)) is coil 2. Residues 472-580 (ECRLSGEGVG…TSSSRRSFKS (109 aa)) are tail. Arginine 526 is modified (omega-N-methylarginine). Positions 555 to 580 (FGSGGGSGSSVKFVSTTSSSRRSFKS) are disordered. Residues 563-580 (SSVKFVSTTSSSRRSFKS) show a composition bias toward low complexity.

This sequence belongs to the intermediate filament family. As to quaternary structure, heterodimer of a type I and a type II keratin. Heterodimer with type I keratin KRT25 leading to the formation of keratin intermediate filament (KIF) network. Forms a heterodimer (via 2B domains) with KRT14 (via 2B domains). Interacts with PLEC isoform 1C, when in a heterodimer with KRT14. Interacts with TCHP. Interacts with EPPK1. Interacts with AMELX. Interacts with PKP1 (via N-terminus) and PKP2. Phosphorylated by CDK1, AURKB and Rho-kinase, phosphorylation is regulated by the cell cycle. Thr-24 phosphorylation, mediated by CDK1, peaks during prometaphase or metaphase cells with phosphorylated filamentous structures evident throughout the cytoplasm during early mitosis. CDK1 phosphorylates Thr-24 in mitotic cells at the site of injury. In terms of processing, O-glycosylated. As to expression, expressed in the corneal epithelium (at protein level). Expressed in the epidermis of the ear (at protein level). Expressed in the basal and spinous layers of the skin at birth (at protein level).

It localises to the cytoplasm. In terms of biological role, required for the formation of keratin intermediate filaments in the basal epidermis and maintenance of the skin barrier in response to mechanical stress. Regulates the recruitment of Langerhans cells to the epidermis, potentially by modulation of the abundance of macrophage chemotactic cytokines, macrophage inflammatory cytokines and CTNND1 localization in keratinocytes. The chain is Keratin, type II cytoskeletal 5 from Mus musculus (Mouse).